The sequence spans 330 residues: Inactive hydroxysteroid dehydrogenase-like protein 1 (330 aa).

Residue Ala-2 is modified to N-acetylalanine. The segment at 2–82 (AAVDSFYLLY…SGATDGIGRA (81 aa)) is required for mitochondria translocation. NADP(+)-binding positions include 74–80 (GATDGIG), Asp-125, and Lys-222.

It belongs to the short-chain dehydrogenases/reductases (SDR) family. 17-beta-HSD 3 subfamily. As to quaternary structure, interacts with STYXL1.

Its subcellular location is the mitochondrion. The chain is Inactive hydroxysteroid dehydrogenase-like protein 1 (HSDL1) from Pongo abelii (Sumatran orangutan).